We begin with the raw amino-acid sequence, 259 residues long: UPF0246 protein VSAL_I2547 (259 aa).

The protein belongs to the UPF0246 family.

The sequence is that of UPF0246 protein VSAL_I2547 from Aliivibrio salmonicida (strain LFI1238) (Vibrio salmonicida (strain LFI1238)).